We begin with the raw amino-acid sequence, 429 residues long: 3-phosphoshikimate 1-carboxyvinyltransferase (429 aa).

Lys23, Ser24, and Arg28 together coordinate 3-phosphoshikimate. Residue Lys23 coordinates phosphoenolpyruvate. Residues Gly95 and Arg123 each contribute to the phosphoenolpyruvate site. Residues Ser168, Gln170, Asp316, and Lys343 each coordinate 3-phosphoshikimate. Residue Gln170 coordinates phosphoenolpyruvate. The active-site Proton acceptor is Asp316. Arg347 and Arg389 together coordinate phosphoenolpyruvate.

It belongs to the EPSP synthase family. As to quaternary structure, monomer.

Its subcellular location is the cytoplasm. It carries out the reaction 3-phosphoshikimate + phosphoenolpyruvate = 5-O-(1-carboxyvinyl)-3-phosphoshikimate + phosphate. It participates in metabolic intermediate biosynthesis; chorismate biosynthesis; chorismate from D-erythrose 4-phosphate and phosphoenolpyruvate: step 6/7. Functionally, catalyzes the transfer of the enolpyruvyl moiety of phosphoenolpyruvate (PEP) to the 5-hydroxyl of shikimate-3-phosphate (S3P) to produce enolpyruvyl shikimate-3-phosphate and inorganic phosphate. This is 3-phosphoshikimate 1-carboxyvinyltransferase from Bacillus cereus (strain AH187).